A 336-amino-acid polypeptide reads, in one-letter code: Corrinoid adenosyltransferase PduO (336 aa).

Residues 1 to 185 (MAIYTRTGDA…IIREVSKRYL (185 aa)) form a pduON region. Positions 194-336 (KETTPVALSF…IAAINVGTHQ (143 aa)) are pduOC. Heme is bound at residue His207. Positions 215 and 218 each coordinate Mg(2+).

Belongs to the Cob(I)alamin adenosyltransferase family. PduO subfamily. As to quaternary structure, the C-terminal domain (PduOC) forms stable octamers and also crystallizes as an octamer. Forms a complex with PduS. Heme b serves as cofactor. It depends on Mg(2+) as a cofactor.

It is found in the bacterial microcompartment. The enzyme catalyses cob(I)alamin-[corrinoid adenosyltransferase] + ATP = apo-[corrinoid adenosyltransferase] + adenosylcob(III)alamin + triphosphate. Its pathway is polyol metabolism; 1,2-propanediol degradation. It participates in cofactor biosynthesis; adenosylcobalamin biosynthesis. Its activity is regulated as follows. Inhibited by ADP but not significantly by other nucleotides, inhibited by diphosphate and less well by triphosphate. Converts cob(I)alamin to adenosylcobalamin (adenosylcob(III)alamin), the cofactor for propanediol dehydratase. Found in the bacterial microcompartment (BMC) dedicated to 1,2-propanediol (1,2-PD) degradation. For adenosylcobalamin synthesis dATP can replace ATP, but no other nucleotides will substitute. PduS and PduO allow regeneration of the adenosylcobalamin cofactor within the BMC. Its function is as follows. The 1,2-PD-specific bacterial microcompartment (BMC) concentrates low levels of 1,2-PD catabolic enzymes, concentrates volatile reaction intermediates thus enhancing pathway flux and keeps the level of toxic, mutagenic propionaldehyde low. This is Corrinoid adenosyltransferase PduO from Salmonella typhimurium (strain LT2 / SGSC1412 / ATCC 700720).